Reading from the N-terminus, the 316-residue chain is L-lactate dehydrogenase (316 aa).

NAD(+) is bound by residues methionine 14, 14–150 (MIGG…IIGL), isoleucine 15, aspartate 35, tyrosine 67, glycine 81, phenylalanine 82, valine 125, asparagine 127, and leucine 150. Arginine 95 is a substrate binding site. Substrate is bound by residues arginine 158 and histidine 182. The Proton acceptor role is filled by histidine 182.

Belongs to the LDH/MDH superfamily. LDH family. As to quaternary structure, homotetramer.

It catalyses the reaction (S)-lactate + NAD(+) = pyruvate + NADH + H(+). Its pathway is fermentation; pyruvate fermentation to lactate; (S)-lactate from pyruvate: step 1/1. This chain is L-lactate dehydrogenase, found in Plasmodium falciparum (isolate CDC / Honduras).